An 86-amino-acid chain; its full sequence is Replication regulatory protein repA2 (86 aa).

The segment covering 1 to 14 (MSQTENAVTSSLSQ) has biased composition (polar residues). The segment at 1 to 31 (MSQTENAVTSSLSQKRFVRRGKPMTDSEKQM) is disordered.

This protein is involved in the determination of copy number in gene replication. It binds to the repA promoter thus inhibiting the synthesis of the mRNA for the initiator protein RepA. The polypeptide is Replication regulatory protein repA2 (repA2) (Escherichia coli).